The following is a 113-amino-acid chain: Hydrogenase maturation factor HypA (113 aa).

Position 2 (H2) interacts with Ni(2+). Positions 73, 76, 89, and 92 each coordinate Zn(2+).

Belongs to the HypA/HybF family.

Involved in the maturation of [NiFe] hydrogenases. Required for nickel insertion into the metal center of the hydrogenase. The sequence is that of Hydrogenase maturation factor HypA from Albidiferax ferrireducens (strain ATCC BAA-621 / DSM 15236 / T118) (Rhodoferax ferrireducens).